Here is a 295-residue protein sequence, read N- to C-terminus: SPX domain-containing protein 1 (295 aa).

An SPX domain is found at 1 to 166; it reads MKFGKSLSSQ…GALIRLPFIQ (166 aa). Residues 199 to 227 form a disordered region; that stretch reads LSVSSEDGRGDSTNEDKPSNPSSSLVNGG. Residues 204-216 show a composition bias toward basic and acidic residues; it reads EDGRGDSTNEDKP.

As to quaternary structure, interacts (via SPX domain) with PHR2 (via C-terminus). Interacts with RLI1 in the nucleus to prevents its positive regulation of leaf inclination during phosphate (Pi) starvation. In terms of tissue distribution, predominantly expressed in roots and leaves. Localized in leaves lamina joints.

The protein resides in the nucleus. Its function is as follows. Involved in plant adaptation to phosphate (Pi) starvation. Inhibits PHR2 DNA-binding activity via a Pi-dependent protein interaction. Suppresses the regulation on expression of PT2 by PHR2 and accumulation of shoot Pi. Optimizes growth under phosphate-limited conditions through a negative feedback loop of the PSI (phosphate starvation-induced) signaling pathway. Regulates the expression of SPX2, SPX3 and SPX5. May be an important link between signal transduction pathways related to phosphate starvation and cold stress. Together with SPX2, plays a negative role in the regulation of leaf inclination by preventing RLI1 transcription factor activity in Pi depleted conditions. The polypeptide is SPX domain-containing protein 1 (Oryza sativa subsp. japonica (Rice)).